The chain runs to 791 residues: Centrosomal protein of 89 kDa (791 aa).

The segment at 27-203 is disordered; that stretch reads APKPAVPRTP…HTQQKDVKHS (177 aa). Residues 30–45 show a composition bias toward pro residues; sequence PAVPRTPPPRSPNPSP. S50 carries the post-translational modification Phosphoserine. Residues 50–62 are compositionally biased toward low complexity; that stretch reads SALAAAILATTLT. Positions 75-89 are enriched in basic and acidic residues; the sequence is SRSESDASDIEKDSF. Polar residues predominate over residues 94-107; that stretch reads ATTSELRLRQSWQN. The span at 137–161 shows a compositional bias: basic and acidic residues; the sequence is RESESTWKDVGDGRDATYTVPHRDQ. Low complexity predominate over residues 181-190; the sequence is SDSSSSSSSS. Coiled coils occupy residues 252-291, 370-598, and 670-737; these read SANQ…TEKA, LLAY…MGKE, and HRLK…SLLQ.

The protein resides in the cytoplasm. It is found in the cytosol. Its subcellular location is the cytoskeleton. The protein localises to the microtubule organizing center. It localises to the centrosome. The protein resides in the spindle pole. It is found in the centriole. Its subcellular location is the mitochondrion intermembrane space. In terms of biological role, required for ciliogenesis. Also plays a role in mitochondrial metabolism where it may modulate complex IV activity. The polypeptide is Centrosomal protein of 89 kDa (Cep89) (Mus musculus (Mouse)).